Consider the following 433-residue polypeptide: 4-hydroxy-3-methylbut-2-en-1-yl diphosphate synthase (flavodoxin) (433 aa).

Positions 1–13 (MNKPETVTENSLA) are enriched in polar residues. Residues 1 to 23 (MNKPETVTENSLASDVAGPAPRH) are disordered. [4Fe-4S] cluster-binding residues include Cys-314, Cys-317, Cys-360, and Glu-367.

It belongs to the IspG family. Requires [4Fe-4S] cluster as cofactor.

It catalyses the reaction (2E)-4-hydroxy-3-methylbut-2-enyl diphosphate + oxidized [flavodoxin] + H2O + 2 H(+) = 2-C-methyl-D-erythritol 2,4-cyclic diphosphate + reduced [flavodoxin]. Its pathway is isoprenoid biosynthesis; isopentenyl diphosphate biosynthesis via DXP pathway; isopentenyl diphosphate from 1-deoxy-D-xylulose 5-phosphate: step 5/6. Functionally, converts 2C-methyl-D-erythritol 2,4-cyclodiphosphate (ME-2,4cPP) into 1-hydroxy-2-methyl-2-(E)-butenyl 4-diphosphate. The sequence is that of 4-hydroxy-3-methylbut-2-en-1-yl diphosphate synthase (flavodoxin) from Bradyrhizobium sp. (strain ORS 278).